We begin with the raw amino-acid sequence, 276 residues long: uncharacterized protein (276 aa).

One can recognise an AB hydrolase-1 domain in the interval 20-137; it reads PVLIFIPGAN…PPINTFLPDS (118 aa). The tract at residues 57-76 is disordered; that stretch reads GESELTEPLPDSASNPDSDY.

The protein belongs to the AB hydrolase superfamily.

This is an uncharacterized protein from Staphylococcus aureus (strain N315).